Reading from the N-terminus, the 418-residue chain is Probable basic-leucine zipper transcription factor E (418 aa).

The stretch at 8-47 forms a coiled coil; that stretch reads IQQIQQLHMLLQQQQQQQQQQQQQQQQQQQQLQQQNFQLT. Composition is skewed to low complexity over residues 51–71 and 95–134; these read FQIP…NNNN and INTT…NNNT. Disordered stretches follow at residues 51-75, 95-149, 165-196, and 211-252; these read FQIP…ETAF, INTT…KKQK, PTAA…TTNT, and KNQE…KNRR. The span at 169–179 shows a compositional bias: basic residues; sequence VKKKPPAKKSA. Over residues 180 to 196 the composition is skewed to low complexity; sequence KNAASQPTSPTLSTTNT. The segment covering 220–239 has biased composition (acidic residues); it reads DNSEESDSDEEDFENGDNEN. The region spanning 246–309 is the bZIP domain; sequence GDRKNRRLLK…QLMKDKVRYL (64 aa). The interval 248–268 is basic motif; it reads RKNRRLLKNREAAQLFRQRQK. The interval 274–281 is leucine-zipper; the sequence is LESKASSL. Positions 324–362 form a coiled coil; it reads SVVNQDNINNLNNNLNGLQNQQNNNNNNNNNNNNNNNNN. The segment at 336 to 418 is disordered; it reads NNLNGLQNQQ…DSLLFNLPPD (83 aa).

This sequence belongs to the bZIP family.

It is found in the nucleus. Its function is as follows. Probable transcriptional regulator. The sequence is that of Probable basic-leucine zipper transcription factor E (bzpE) from Dictyostelium discoideum (Social amoeba).